A 145-amino-acid polypeptide reads, in one-letter code: Neuromedin-S (145 aa).

The signal sequence occupies residues 1-27; it reads MRSEKHLPPLPLLLAICCLGTLHPSSG. Propeptides lie at residues 28-89 and 92-117; these read FPQS…HEIY and FLFQ…AEYT. Asparagine amide is present on Asn-136. Positions 140 to 145 are excised as a propeptide; sequence VSINEH.

The protein belongs to the NmU family. In terms of tissue distribution, expressed by the skin glands.

The protein localises to the secreted. Stimulates uterine smooth muscle contraction. Synthetic peptide NmS-17 induces calcium mobilization in CHO cells transfected with either human FM-3/GPR66 (EC(50)=0.085 nM) or FM-4/TGR-1 (EC(50)=0.231 nM) NmU/NmS receptors. The sequence is that of Neuromedin-S (nms) from Bombina orientalis (Oriental fire-bellied toad).